A 461-amino-acid chain; its full sequence is Kynurenine 3-monooxygenase (461 aa).

The next 2 helical transmembrane spans lie at 395-415 and 432-452; these read TIMN…VTFS and ILSR…AAGI.

Belongs to the aromatic-ring hydroxylase family. KMO subfamily. It depends on FAD as a cofactor.

The protein localises to the mitochondrion. The protein resides in the membrane. The enzyme catalyses L-kynurenine + NADPH + O2 + H(+) = 3-hydroxy-L-kynurenine + NADP(+) + H2O. Its pathway is cofactor biosynthesis; NAD(+) biosynthesis; quinolinate from L-kynurenine: step 1/3. Catalyzes the hydroxylation of L-kynurenine (L-Kyn) to form 3-hydroxy-L-kynurenine (L-3OHKyn). Required for synthesis of quinolinic acid. The chain is Kynurenine 3-monooxygenase from Caenorhabditis elegans.